Reading from the N-terminus, the 318-residue chain is Protein-L-histidine N-pros-methyltransferase (318 aa).

The signal sequence occupies residues Met1–Ala18. Residue Asn35 is glycosylated (N-linked (GlcNAc...) asparagine). The S-adenosyl-L-homocysteine site is built by Glu174, Asn210, and Tyr295.

The protein belongs to the METTL9 family.

It is found in the endoplasmic reticulum. Its subcellular location is the mitochondrion. The catalysed reaction is L-histidyl-[protein] + S-adenosyl-L-methionine = N(pros)-methyl-L-histidyl-[protein] + S-adenosyl-L-homocysteine + H(+). In terms of biological role, protein-histidine N-methyltransferase that specifically catalyzes 1-methylhistidine (pros-methylhistidine) methylation of target proteins. Specifically methylates the second His of proteins with a His-x-His (HxH) motif (where 'x' is preferably a small amino acid), while exploiting the first one as a recognition signature. Catalyzes methylation of target proteins such as S100A9, NDUFB3, SLC39A5, SLC39A7, ARMC6 and DNAJB12; 1-methylhistidine modification may affect the binding of zinc and other metals to its target proteins. Constitutes the main methyltransferase for the 1-methylhistidine modification in cell. The chain is Protein-L-histidine N-pros-methyltransferase from Homo sapiens (Human).